The sequence spans 351 residues: Protein Maqu_2141 (351 aa).

Belongs to the proline racemase family.

In terms of biological role, displays neither proline racemase activity nor trans-4-hydroxy-L-proline (t4LHyp) epimerase activity nor t3LHyp dehydratase activity. This Marinobacter nauticus (strain ATCC 700491 / DSM 11845 / VT8) (Marinobacter aquaeolei) protein is Protein Maqu_2141.